A 299-amino-acid chain; its full sequence is tRNA pseudouridine synthase B (299 aa).

Aspartate 45 serves as the catalytic Nucleophile.

This sequence belongs to the pseudouridine synthase TruB family. Type 1 subfamily.

It carries out the reaction uridine(55) in tRNA = pseudouridine(55) in tRNA. Responsible for synthesis of pseudouridine from uracil-55 in the psi GC loop of transfer RNAs. The sequence is that of tRNA pseudouridine synthase B from Streptomyces griseus subsp. griseus (strain JCM 4626 / CBS 651.72 / NBRC 13350 / KCC S-0626 / ISP 5235).